The primary structure comprises 1032 residues: Reticulon-3 (1032 aa).

Over residues 1-24 (MAEPSAATQSHSISSSSFGAEPSA) the composition is skewed to low complexity. The segment at 1 to 61 (MAEPSAATQS…SSSSSQPVSL (61 aa)) is disordered. The residue at position 2 (Ala2) is an N-acetylalanine. The Cytoplasmic segment spans residues 2–863 (AEPSAATQSH…KKTGFVFGTT (862 aa)). Ser30 carries the phosphoserine modification. The span at 32–61 (GACPALGTKSCSSSCADSFVSSSSSQPVSL) shows a compositional bias: low complexity. 6 positions are modified to phosphoserine: Ser229, Ser243, Ser246, Ser283, Ser316, and Ser453. Residues 545-568 (CEREEKTSKNFEELVSDSELHQDQ) show a composition bias toward basic and acidic residues. Residues 545 to 617 (CEREEKTSKN…NPKLPSTVSP (73 aa)) are disordered. The segment covering 605-617 (TTENPKLPSTVSP) has biased composition (polar residues). 2 positions are modified to phosphoserine: Ser649 and Ser650. A compositionally biased stretch (basic and acidic residues) spans 696–715 (NESGGSEIKDIGSKYSEQSK). The segment at 696–726 (NESGGSEIKDIGSKYSEQSKETNGSEPLGVF) is disordered. A Phosphoserine modification is found at Ser735. The Reticulon domain maps to 844-1032 (VHDLIFWRDV…LPGIAKKKAE (189 aa)). Residues 864 to 887 (LIMLLSLAAFSVISVVSYLILALL) constitute an intramembrane region (helical). At 888 to 947 (SVTISFRIYKSVIQAVQKSEEGHPFKAYLDVDITLSSEAFHNYMNAAMVHINRALKLIIR) the chain is on the cytoplasmic side. The helical intramembrane region spans 948–968 (LFLVEDLVDSLKLAVFMWLMT). Residues 969–972 (YVGA) are Cytoplasmic-facing. An intramembrane region (helical) is located at residues 973–993 (VFNGITLLILAELLIFSVPIV). The segment at 987–1032 (IFSVPIVYEKYKTQIDHYVGIARDQTKSIVEKIQAKLPGIAKKKAE) is interaction with FADD. At 994–1032 (YEKYKTQIDHYVGIARDQTKSIVEKIQAKLPGIAKKKAE) the chain is on the cytoplasmic side. Positions 1000–1002 (QID) are interaction with BACE1.

Homodimer. Interacts with ATL1. Interacts with RTN4. Isoform 3 interacts with BACE1, BACE2, BCL2 and FADD. Interacts with ATL2. Interacts with TMEM33. Interacts with ZFYVE27 and with KIF5A in a ZFYVE27-dependent manner. Interacts with RIGI. Interacts with TRIM25. In terms of assembly, (Microbial infection) Interacts with Coxsackievirus A16, enterovirus 71 and poliovirus P2C proteins. As to quaternary structure, (Microbial infection) Interacts with West Nile virus protein NS4A. In terms of tissue distribution, isoform 3 is widely expressed, with highest levels in brain, where it is enriched in neuronal cell bodies from gray matter (at protein level). Three times more abundant in macula than in peripheral retina. Isoform 1 is expressed at high levels in brain and at low levels in skeletal muscle. Isoform 2 is only found in melanoma.

The protein localises to the endoplasmic reticulum membrane. Its subcellular location is the golgi apparatus membrane. Its function is as follows. May be involved in membrane trafficking in the early secretory pathway. Inhibits BACE1 activity and amyloid precursor protein processing. May induce caspase-8 cascade and apoptosis. May favor BCL2 translocation to the mitochondria upon endoplasmic reticulum stress. Induces the formation of endoplasmic reticulum tubules. Also acts as an inflammation-resolving regulator by interacting with both TRIM25 and RIGI, subsequently impairing RIGI 'Lys-63'-linked polyubiquitination leading to IRF3 and NF-kappa-B inhibition. (Microbial infection) Plays a positive role in viral replication and pathogenesis of enteroviruses. This Homo sapiens (Human) protein is Reticulon-3 (RTN3).